Reading from the N-terminus, the 391-residue chain is Probable sugar efflux transporter (391 aa).

12 consecutive transmembrane segments (helical) span residues 16 to 36 (VFVF…PVAL), 51 to 71 (VGLM…PLML), 82 to 102 (LLFL…AWNF), 110 to 130 (MGIA…VIRV), 138 to 158 (QALG…LPLG), 170 to 190 (TFGV…KLLP), 210 to 230 (PLLM…FTTY), 247 to 267 (ITTL…FLFG), 277 to 297 (FIAF…VFKN), 300 to 320 (WVVF…GISL), 338 to 358 (IYSG…SIVI), and 361 to 381 (LGLG…LFWL).

This sequence belongs to the major facilitator superfamily. SotB (TC 2.A.1.2) family.

The protein resides in the cell inner membrane. In terms of biological role, involved in the efflux of sugars. The physiological role may be the reduction of the intracellular concentration of toxic sugars or sugar metabolites. This is Probable sugar efflux transporter from Helicobacter pylori (strain ATCC 700392 / 26695) (Campylobacter pylori).